A 98-amino-acid polypeptide reads, in one-letter code: MAPKKTTKKGGPKKRPSAEKRILTAQKRNLINQSFKSKAKTMMKKFEAALKAGDQTSISSGLQLVYSVADKAVKRGVFKSNKAARIKARATLRANAKV.

Basic residues predominate over residues 1–15; the sequence is MAPKKTTKKGGPKKR. The disordered stretch occupies residues 1 to 21; it reads MAPKKTTKKGGPKKRPSAEKR.

This sequence belongs to the bacterial ribosomal protein bS20 family.

Functionally, binds directly to 16S ribosomal RNA. The polypeptide is Small ribosomal subunit protein bS20 (Chlamydia felis (strain Fe/C-56) (Chlamydophila felis)).